Here is a 268-residue protein sequence, read N- to C-terminus: ClpXP adapter protein SpxH (268 aa).

The protein belongs to the SpxH family. Interacts with Spx.

It localises to the cytoplasm. Adapter protein required for efficient degradation of Spx by ClpXP under non-stress conditions. Interaction with Spx stabilizes Spx and exposes the C-terminus of Spx for recognition and proteolysis by ClpXP. The sequence is that of ClpXP adapter protein SpxH from Staphylococcus aureus (strain COL).